The chain runs to 565 residues: 4-coumarate--CoA ligase-like 2 (565 aa).

Residues Ser221, Ser222, Gly223, Thr224, Thr225, and Lys229 each coordinate ATP. Position 265 (Phe265) interacts with (E)-4-coumaroyl-AMP. Position 286 (Lys286) interacts with CoA. The tract at residues 288–359 is SBD1; it reads DMAKLLSAVE…ENYPKVKILQ (72 aa). (E)-4-coumaroyl-AMP is bound by residues Gly337, Gln359, Gly360, and Thr364. The ATP site is built by Gln359, Gly360, Thr364, Asp445, and Arg460. Residues 360–424 form an SBD2 region; it reads GYGLTESTAI…IRSPTVMKGY (65 aa). 2 residues coordinate (E)-4-coumaroyl-AMP: Lys462 and Lys466. Gly469 lines the CoA pocket. Lys551 is a binding site for ATP. The Microbody targeting signal motif lies at 563–565; the sequence is SKL.

This sequence belongs to the ATP-dependent AMP-binding enzyme family. Mg(2+) is required as a cofactor.

The protein resides in the peroxisome. The catalysed reaction is (E)-4-coumarate + ATP + CoA = (E)-4-coumaroyl-CoA + AMP + diphosphate. The enzyme catalyses (E)-4-coumarate + ATP + H(+) = (E)-4-coumaroyl-AMP + diphosphate. It carries out the reaction (E)-4-coumaroyl-AMP + CoA = (E)-4-coumaroyl-CoA + AMP + H(+). Its function is as follows. Carboxylate--CoA ligase that may use 4-coumarate as substrate. Follows a two-step reaction mechanism, wherein the carboxylate substrate first undergoes adenylation by ATP, followed by a thioesterification in the presence of CoA to yield the final CoA thioester. The chain is 4-coumarate--CoA ligase-like 2 from Arabidopsis thaliana (Mouse-ear cress).